Consider the following 702-residue polypeptide: Amino-acid racemase (702 aa).

Topologically, residues 1 to 12 (MKHRANGIDLFR) are cytoplasmic. The chain crosses the membrane as a helical span at residues 13-33 (IFAATMVVAIHTFPFQSIAPF). At 34–39 (LDEVIT) the chain is on the extracellular side. Residues 40 to 60 (LTVFRVAVPFFFMITGYFLLG) form a helical membrane-spanning segment. Over 61-77 (RLSLNFSYNNNQRVKKY) the chain is Cytoplasmic. Residues 78–98 (LYKIGMIYLYSILLYFPLSLL) traverse the membrane as a helical segment. Residues 99–120 (NGTISLKMNILLLLKVFIFDGT) are Extracellular-facing. The helical transmembrane segment at 121 to 141 (FYHLWYFPASIIGTILVTLLL) threads the bilayer. A topological domain (cytoplasmic) is located at residue arginine 142. Residues 143–163 (SIGFKLTVAFSTCLYLVGLGG) form a helical membrane-spanning segment. The Extracellular portion of the chain corresponds to 164 to 191 (DSWYGITNQVPLLNKLYTFIFSWSDYTR). Residues 192–212 (SGVFFTPVFLCLGIFAYRVSK) form a helical membrane-spanning segment. The Cytoplasmic portion of the chain corresponds to 213-218 (KLTASK). A helical membrane pass occupies residues 219–239 (ILNLLFYVFIIGMTFESIFLH). Topologically, residues 240–248 (RFTNVKHDS) are extracellular. Residues 249–269 (MYLLLPSCALILFLMLLNWQP) traverse the membrane as a helical segment. At 270 to 276 (KLKVKES) the chain is on the cytoplasmic side. The chain crosses the membrane as a helical span at residues 277–297 (ADLTLLVYILHPLVIVIVHSI). The Extracellular portion of the chain corresponds to 298–307 (SKYIPILKNS). Residues 308 to 328 (LLNFLLVVVCSFILAQLLLNL) form a helical membrane-spanning segment. The Cytoplasmic segment spans residues 329 to 702 (KRKLRVSKQK…LGSRLGTELN (374 aa)). The interval 337–702 (QKIPFERASK…LGSRLGTELN (366 aa)) is racemase. Lysine 375 acts as the Proton acceptor in catalysis. Lysine 375 carries the N6-(pyridoxal phosphate)lysine modification. Arginine 469 contributes to the substrate binding site. Tyrosine 601 acts as the Proton acceptor in catalysis. Position 650 (methionine 650) interacts with substrate.

The protein in the N-terminal section; belongs to the acyltransferase 3 family. This sequence in the C-terminal section; belongs to the alanine racemase family. It depends on pyridoxal 5'-phosphate as a cofactor.

It is found in the cell membrane. In Enterococcus faecalis (Streptococcus faecalis), this protein is Amino-acid racemase (vanTE).